Consider the following 838-residue polypeptide: Transient receptor potential cation channel subfamily V member 1 (838 aa).

2 disordered regions span residues 1–63 (MEQR…PLDC) and 86–109 (RPGD…EKPP). At 1–432 (MEQRASLDSE…QDKWDRFVKR (432 aa)) the chain is on the cytoplasmic side. An ANK 1 repeat occupies 110–138 (RLYDRRSIFDAVAQSNCQELESLLPFLQR). ATP is bound at residue arginine 115. Serine 116 is subject to Phosphoserine; by PKA and PKD. Threonine 144 carries the post-translational modification Phosphothreonine; by PKA; in vitro. The stretch at 153-185 (TGKTCLLKAMLNLHNGQNDTIALLLDVARKTDS) is one ANK 2 repeat. Residues lysine 155, lysine 160, asparagine 164, 199–202 (YKGQ), and 210–211 (ER) contribute to the ATP site. 4 ANK repeats span residues 203–228 (TALH…ADVQ), 249–276 (ELPL…QPAD), 285–321 (NTVL…KLHP), and 335–358 (TPLA…REIH). Position 370 is a phosphothreonine; by PKA; in vitro (threonine 370). Residues 393–415 (NSVLEVIAYSSSETPNRHDMLLV) form an ANK 7 repeat. A helical membrane pass occupies residues 433–453 (IFYFNFFVYCLYMIIFTAAAY). Over 454 to 471 (YRPVEGLPPYKLKNTVGD) the chain is Extracellular. Residues 472–497 (YFRVTGEILSVSGGVYFFFRGIQYFL) form a helical membrane-spanning segment. The Cytoplasmic portion of the chain corresponds to 498-510 (QRRPSLKSLFVDS). Position 502 is a phosphoserine; by PKC/PRKCE (serine 502). Resiniferatoxin is bound at residue 511–512 (YS). The helical transmembrane segment at 511 to 531 (YSEILFFVQSLFMLVSVVLYF) threads the bilayer. The Extracellular segment spans residues 532 to 535 (SQRK). Residues 536–556 (EYVASMVFSLAMGWTNMLYYT) traverse the membrane as a helical segment. Threonine 550 and arginine 557 together coordinate resiniferatoxin. At 557-571 (RGFQQMGIYAVMIEK) the chain is on the cytoplasmic side. The helical transmembrane segment at 572–599 (MILRDLCRFMFVYLVFLFGFSTAVVTLI) threads the bilayer. The Extracellular portion of the chain corresponds to 600-626 (EDGKNNSLPMESTPHKCRGSACKPGNS). Asparagine 604 carries N-linked (GlcNAc...) asparagine glycosylation. The pore-forming intramembrane region spans 627–649 (YNSLYSTCLELFKFTIGMGDLEF). Residue glycine 643 participates in Na(+) binding. Residues 643–646 (GMGD) carry the Selectivity filter motif. Position 646 (aspartate 646) interacts with Ca(2+). At 650–657 (TENYDFKA) the chain is on the extracellular side. A helical transmembrane segment spans residues 658–686 (VFIILLLAYVILTYILLLNMLIALMGETV). Residues 684–712 (ETVNKIAQESKNIWKLQRAITILDTEKSF) form an AD region. Residues 687 to 838 (NKIAQESKNI…FKDSMVPGEK (152 aa)) are Cytoplasmic-facing. Residue threonine 704 is modified to Phosphothreonine. The interaction with calmodulin stretch occupies residues 767–801 (EGVKRTLSFSLRSGRVSGRNWKNFALVPLLRDAST). At serine 774 the chain carries Phosphoserine; by PKA; in vitro. Positions 777-792 (LRSGRVSGRNWKNFAL) are required for PIP2-mediated channel inhibition. A Phosphoserine; by PKC/PRKCE and PKC/PRKCZ modification is found at serine 800. Serine 820 bears the Phosphoserine; by PKA; in vitro mark.

This sequence belongs to the transient receptor (TC 1.A.4) family. TrpV subfamily. TRPV1 sub-subfamily. Homotetramer. Interacts with PIRT. May also form a heteromeric channel with TRPV3. Interacts with CALM, PRKCM and CSK. Interacts with PRKCG and NTRK1, probably by forming a trimeric complex. Interacts with the Scolopendra mutilans RhTx toxin. Interacts with the spider Tau-theraphotoxin-Hs1a. Interacts with TMEM100. Interacts with PACS2. In terms of processing, phosphorylation by PKA reverses capsaicin-induced dephosphorylation at multiple sites, probably including Ser-116 as a major phosphorylation site. Phosphorylation by CAMKII seems to regulate binding to vanilloids. Phosphorylated and modulated by PRKCE, PRKCM and probably PRKCZ. Dephosphorylation by calcineurin seems to lead to receptor desensitization and phosphorylation by CAMKII recovers activity. As to expression, predominantly expressed in trigeminal and dorsal root sensory ganglia. Expressed also in hippocampus, cortex, cerebellum, olfactory bulb, mesencephalon and hindbrain. High expression in the cell bodies and dendrites of neurons in the hippocampus and in the cortex. In the brain detected also in astrocytes and pericytes (at protein level). Isoform 1 and isoform 3 are expressed in brain and peripheral blood mononuclear cells.

The protein localises to the postsynaptic cell membrane. It is found in the cell projection. It localises to the dendritic spine membrane. The protein resides in the cell membrane. It catalyses the reaction Ca(2+)(in) = Ca(2+)(out). The enzyme catalyses Mg(2+)(in) = Mg(2+)(out). The catalysed reaction is Na(+)(in) = Na(+)(out). It carries out the reaction K(+)(in) = K(+)(out). Its activity is regulated as follows. Channel activity is activated via the interaction with PIRT and phosphatidylinositol 4,5-bisphosphate (PIP2). Both PIRT and PIP2 are required to activate channel activity. The channel is sensitized by ATP binding. Repeated stimulation with capsaicin gives rise to progressively smaller responses, due to desensitization. This desensitization is triggered by the influx of calcium ions and is inhibited by elevated ATP levels. Ca(2+) and CALM displace ATP from its binding site and trigger a conformation change that leads to a closed, desensitized channel. Intracellular PIP2 inhibits desensitization. The double-knot toxin (DkTx) from the Chinese earth tiger tarantula activates the channel and traps it in an open conformation. The Scolopendra mutilans RhTx toxin potentiates the heat activation pathway mediated by this channel by binding to the charge-rich outer pore region (in an activated state). In terms of biological role, non-selective calcium permeant cation channel involved in detection of noxious chemical and thermal stimuli. Seems to mediate proton influx and may be involved in intracellular acidosis in nociceptive neurons. Involved in mediation of inflammatory pain and hyperalgesia. Sensitized by a phosphatidylinositol second messenger system activated by receptor tyrosine kinases, which involves PKC isozymes and PCL. Activation by vanilloids, like capsaicin, and temperatures higher than 42 degrees Celsius. Upon activation, exhibits a time- and Ca(2+)-dependent outward rectification, followed by a long-lasting refractory state. Mild extracellular acidic pH (6.5) potentiates channel activation by noxious heat and vanilloids, whereas acidic conditions (pH &lt;6) directly activate the channel. Can be activated by endogenous compounds, including 12-hydroperoxytetraenoic acid and bradykinin. Acts as ionotropic endocannabinoid receptor with central neuromodulatory effects. Triggers a form of long-term depression (TRPV1-LTD) mediated by the endocannabinoid anandamine in the hippocampus and nucleus accumbens by affecting AMPA receptors endocytosis. Does not display channel activity in response to noxious chemical compounds, such as capsaicin and the vanilloid resiniferatoxin. Channel activity is not elicited by mildly acidic extracellular pH, and only slight channel activity is observed in response to noxiuos heat stimuli. This is Transient receptor potential cation channel subfamily V member 1 (Trpv1) from Rattus norvegicus (Rat).